A 567-amino-acid chain; its full sequence is Pyruvate decarboxylase (567 aa).

Aspartate 28 and histidine 117 together coordinate pyruvate. Thiamine diphosphate-binding positions include threonine 393 and 416–418; that span reads GSI. Aspartate 447 provides a ligand contact to Mg(2+). Thiamine diphosphate contacts are provided by residues 448–449 and 475–480; these read GS and NDGYTI. Asparagine 475 and glycine 477 together coordinate Mg(2+). Pyruvate is bound at residue glutamate 481.

Belongs to the TPP enzyme family. In terms of assembly, homotetramer. Mg(2+) is required as a cofactor. The cofactor is thiamine diphosphate.

It localises to the cytoplasm. The enzyme catalyses a 2-oxocarboxylate + H(+) = an aldehyde + CO2. It catalyses the reaction pyruvate + H(+) = acetaldehyde + CO2. The polypeptide is Pyruvate decarboxylase (PDC11) (Candida albicans (strain SC5314 / ATCC MYA-2876) (Yeast)).